Here is a 352-residue protein sequence, read N- to C-terminus: tRNA-specific 2-thiouridylase MnmA (352 aa).

ATP contacts are provided by residues 9-16 and Met35; that span reads ALSGGVDS. Residue Cys96 is the Nucleophile of the active site. Cysteines 96 and 192 form a disulfide. Gly120 is a binding site for ATP. The segment at 142–144 is interaction with tRNA; the sequence is KDQ. Catalysis depends on Cys192, which acts as the Cysteine persulfide intermediate. Residues 299–300 form an interaction with tRNA region; it reads RY.

The protein belongs to the MnmA/TRMU family.

The protein localises to the cytoplasm. It carries out the reaction S-sulfanyl-L-cysteinyl-[protein] + uridine(34) in tRNA + AH2 + ATP = 2-thiouridine(34) in tRNA + L-cysteinyl-[protein] + A + AMP + diphosphate + H(+). Functionally, catalyzes the 2-thiolation of uridine at the wobble position (U34) of tRNA, leading to the formation of s(2)U34. This chain is tRNA-specific 2-thiouridylase MnmA, found in Acidithiobacillus ferrooxidans (strain ATCC 23270 / DSM 14882 / CIP 104768 / NCIMB 8455) (Ferrobacillus ferrooxidans (strain ATCC 23270)).